We begin with the raw amino-acid sequence, 335 residues long: Glucan endo-1,3-beta-glucosidase, acidic isoform (335 aa).

The N-terminal stretch at 1–29 (MARQGVIASMHALALLLGAFAAIPTGVQS) is a signal peptide. Glutamate 122 serves as the catalytic Proton donor. Glutamate 259 (nucleophile) is an active-site residue.

The protein belongs to the glycosyl hydrolase 17 family. Accumulates in aleurone layers. Much lower levels are found in the embryo, and none in starchy endosperm.

It is found in the secreted. Its subcellular location is the extracellular space. It carries out the reaction Hydrolysis of (1-&gt;3)-beta-D-glucosidic linkages in (1-&gt;3)-beta-D-glucans.. In terms of biological role, is thought to be an important plant defense-related product against fungal pathogens. In Zea mays (Maize), this protein is Glucan endo-1,3-beta-glucosidase, acidic isoform.